Reading from the N-terminus, the 162-residue chain is ATP synthase subunit b (162 aa).

Residues 6 to 25 (TLFTLVTFLVLMLAVGKVAW) traverse the membrane as a helical segment.

The protein belongs to the ATPase B chain family. As to quaternary structure, F-type ATPases have 2 components, F(1) - the catalytic core - and F(0) - the membrane proton channel. F(1) has five subunits: alpha(3), beta(3), gamma(1), delta(1), epsilon(1). F(0) has three main subunits: a(1), b(2) and c(10-14). The alpha and beta chains form an alternating ring which encloses part of the gamma chain. F(1) is attached to F(0) by a central stalk formed by the gamma and epsilon chains, while a peripheral stalk is formed by the delta and b chains.

The protein resides in the cell membrane. Its function is as follows. F(1)F(0) ATP synthase produces ATP from ADP in the presence of a proton or sodium gradient. F-type ATPases consist of two structural domains, F(1) containing the extramembraneous catalytic core and F(0) containing the membrane proton channel, linked together by a central stalk and a peripheral stalk. During catalysis, ATP synthesis in the catalytic domain of F(1) is coupled via a rotary mechanism of the central stalk subunits to proton translocation. Component of the F(0) channel, it forms part of the peripheral stalk, linking F(1) to F(0). The polypeptide is ATP synthase subunit b (Lacticaseibacillus casei (strain BL23) (Lactobacillus casei)).